The chain runs to 529 residues: Probable cytochrome P450 6t1 (529 aa).

Residue cysteine 472 participates in heme binding.

This sequence belongs to the cytochrome P450 family. Requires heme as cofactor.

The protein localises to the endoplasmic reticulum membrane. Its subcellular location is the microsome membrane. In terms of biological role, may be involved in the metabolism of insect hormones and in the breakdown of synthetic insecticides. This Drosophila melanogaster (Fruit fly) protein is Probable cytochrome P450 6t1 (Cyp6t1).